We begin with the raw amino-acid sequence, 211 residues long: Mitotic spindle assembly checkpoint protein MAD2B (211 aa).

Residues 13–203 (QVVADVLSEF…SDILKMQLYV (191 aa)) form the HORMA domain.

In terms of assembly, homooligomer. Interacts with REV1. Interacts with FZR1 (in complex with the anaphase promoting complex APC). May interact with CDC20. Heterodimer with REV3L. This dimer forms the minimal DNA polymerase zeta complex (Pol-zeta2), with REV3L bearing DNA polymerase catalytic activity, although its activity is very low in this context. Component of the tetrameric Pol-zeta complex (Pol-zeta4), which consists of REV3L, MAD2L2, POLD2 and POLD3; Pol-zeta4 is the fully active form of DNA polymerase zeta. Component of the shieldin complex, consisting of SHLD1, SHLD2, SHLD3 and MAD2L2/REV7. Within the complex, SHLD2 forms a scaffold which interacts with a SHLD3-MAD2L2 subcomplex via its N-terminus, and with SHLD1 via its C-terminus.

It is found in the nucleus. Its subcellular location is the cytoplasm. The protein localises to the cytoskeleton. The protein resides in the spindle. It localises to the chromosome. Functionally, adapter protein able to interact with different proteins and involved in different biological processes. Mediates the interaction between the error-prone DNA polymerase zeta catalytic subunit REV3L and the inserter polymerase REV1, thereby mediating the second polymerase switching in translesion DNA synthesis. Translesion DNA synthesis releases the replication blockade of replicative polymerases, stalled in presence of DNA lesions. May also play a role in signal transduction in response to DNA damage. May regulate the activation of the anaphase promoting complex APC thereby regulating progression through the cell cycle. Component of the shieldin complex, which plays an important role in repair of DNA double-stranded breaks (DSBs). During G1 and S phase of the cell cycle, the complex functions downstream of TP53BP1 to promote non-homologous end joining (NHEJ) and suppress DNA end resection. Through transcriptional regulation may play a role in epithelial-mesenchymal transdifferentiation. The protein is Mitotic spindle assembly checkpoint protein MAD2B (MAD2L2) of Gallus gallus (Chicken).